A 556-amino-acid polypeptide reads, in one-letter code: Urease subunit alpha 1 (556 aa).

The Urease domain maps to 127–556 (GAVDTHVHLL…SVSLNRLYFL (430 aa)). His-132, His-134, and Lys-212 together coordinate Ni(2+). Lys-212 is subject to N6-carboxylysine. His-214 serves as a coordination point for substrate. Ni(2+) is bound by residues His-241 and His-267. Catalysis depends on His-315, which acts as the Proton donor. Asp-355 provides a ligand contact to Ni(2+).

Belongs to the metallo-dependent hydrolases superfamily. Urease alpha subunit family. May form a heterohexamer of 3 UreC (alpha) and 3 UreAB (gamma/beta) subunits. May also form a heterotrimer of UreA (gamma), UreB (beta) and UreC (alpha) subunits. Three heterotrimers associate to form the active enzyme. Requires Ni cation as cofactor. In terms of processing, carboxylation allows a single lysine to coordinate two nickel ions.

The protein resides in the cytoplasm. It catalyses the reaction urea + 2 H2O + H(+) = hydrogencarbonate + 2 NH4(+). It participates in nitrogen metabolism; urea degradation; CO(2) and NH(3) from urea (urease route): step 1/1. This is Urease subunit alpha 1 from Streptomyces avermitilis (strain ATCC 31267 / DSM 46492 / JCM 5070 / NBRC 14893 / NCIMB 12804 / NRRL 8165 / MA-4680).